A 152-amino-acid chain; its full sequence is Ribosome maturation factor RimP (152 aa).

This sequence belongs to the RimP family.

Its subcellular location is the cytoplasm. Its function is as follows. Required for maturation of 30S ribosomal subunits. In Burkholderia cenocepacia (strain ATCC BAA-245 / DSM 16553 / LMG 16656 / NCTC 13227 / J2315 / CF5610) (Burkholderia cepacia (strain J2315)), this protein is Ribosome maturation factor RimP.